The following is a 123-amino-acid chain: Ribosome-binding factor A (123 aa).

It belongs to the RbfA family. As to quaternary structure, monomer. Binds 30S ribosomal subunits, but not 50S ribosomal subunits or 70S ribosomes.

It is found in the cytoplasm. Its function is as follows. One of several proteins that assist in the late maturation steps of the functional core of the 30S ribosomal subunit. Associates with free 30S ribosomal subunits (but not with 30S subunits that are part of 70S ribosomes or polysomes). Required for efficient processing of 16S rRNA. May interact with the 5'-terminal helix region of 16S rRNA. The sequence is that of Ribosome-binding factor A from Neisseria meningitidis serogroup C (strain 053442).